We begin with the raw amino-acid sequence, 215 residues long: MNMSYLFFFFFIQLVLKYINSKVTENTICKDGFLIQMSNHFECNCNPGFVLTSESTCENKVECNANSLDKRCGDFSKCAYKDLQQKELTCKCIDGYDLEESICVPNECKNFRCESGKCVLDPKQEAKIPMCSCFIGIVPSKENNNTCTIEGQTECTLKCTKENETCKKTSGIYKCDCKDGYTFDKEENACISFSLFNILNLSIIFIISLIYFYII.

The signal sequence occupies residues 1–16 (MNMSYLFFFFFIQLVL). One can recognise an EGF-like 1; truncated domain in the interval 29–58 (CKDGFLIQMSNHFECNCNPGFVLTSESTCE). 3 EGF-like domains span residues 59–104 (NKVE…SICV), 104–148 (VPNE…NTCT), and 151–191 (GQTE…NACI). Disulfide bonds link Cys63-Cys78, Cys72-Cys90, Cys92-Cys103, Cys108-Cys118, Cys113-Cys131, Cys133-Cys147, Cys155-Cys166, Cys159-Cys175, and Cys177-Cys190. Residues Asn144 and Asn163 are each glycosylated (N-linked (GlcNAc...) asparagine). Residue Ser192 is the site of GPI-anchor amidated serine attachment. A propeptide spans 193–215 (FSLFNILNLSIIFIISLIYFYII) (removed in mature form). Asn200 carries N-linked (GlcNAc...) asparagine glycosylation.

The protein resides in the cell membrane. The sequence is that of 25 kDa ookinete surface antigen from Plasmodium gallinaceum.